The following is a 231-amino-acid chain: 26S proteasome non-ATPase regulatory subunit 10 (231 aa).

7 ANK repeats span residues 3–36 (GCVS…ATRT), 37–69 (DQDS…VNDK), 70–102 (DDAG…VNAV), 103–135 (NQNG…PDAK), 136–168 (DHYD…TNIQ), 169–201 (DTEG…IYIE), and 202–226 (NKEE…LAES).

As to quaternary structure, part of transient complex containing PSMD10, PSMC4, PSMC5 and PAAF1 formed during the assembly of the 26S proteasome. Stays associated throughout the assembly of the PA700/19S RC and is released upon association with the 20S core. Interacts with PSMC4. Interacts with RB1. Interacts with CDK4. Interacts with MDM2. Interacts with RELA. Associates with a CDK4:CCND2 serine/threonine kinase complex. Interacts with ARHGDIA and increases the interaction between ARHGDIA and RHOA, hence promotes ARHGDIA inactivation of RHOA and ROCK.

Its subcellular location is the cytoplasm. It is found in the nucleus. Its function is as follows. Acts as a chaperone during the assembly of the 26S proteasome, specifically of the PA700/19S regulatory complex (RC). In the initial step of the base subcomplex assembly is part of an intermediate PSMD10:PSMC4:PSMC5:PAAF1 module which probably assembles with a PSMD5:PSMC2:PSMC1:PSMD2 module. Independently of the proteasome, regulates EGF-induced AKT activation through inhibition of the RHOA/ROCK/PTEN pathway, leading to prolonged AKT activation. Plays an important role in RAS-induced tumorigenesis. Acts as an oncoprotein by being involved in negative regulation of tumor suppressors RB1 and p53/TP53. Overexpression is leading to phosphorylation of RB1 and proteasomal degradation of RB1. Regulates CDK4-mediated phosphorylation of RB1 by competing with CDKN2A for binding with CDK4. Facilitates binding of MDM2 to p53/TP53 and the mono- and polyubiquitination of p53/TP53 by MDM2 suggesting a function in targeting the TP53:MDM2 complex to the 26S proteasome. Involved in p53-independent apoptosis. Involved in regulation of NF-kappa-B by retaining it in the cytoplasm. Binds to the NF-kappa-B component RELA and accelerates its XPO1/CRM1-mediated nuclear export. The sequence is that of 26S proteasome non-ATPase regulatory subunit 10 (Psmd10) from Mus musculus (Mouse).